Here is a 132-residue protein sequence, read N- to C-terminus: MFDGIGFMELLLIGILGLVVLGPERLPVAVRSITGWIRAMKRMANSVKDELEQELKIEELHADLKKAESQGLKNLSPELQESIDQLKSAAQSVNRPYKVEDISPASSSAPVDPAPTETKTAETSANSEKPNG.

A helical transmembrane segment spans residues 2–22 (FDGIGFMELLLIGILGLVVLG). The disordered stretch occupies residues 86 to 132 (LKSAAQSVNRPYKVEDISPASSSAPVDPAPTETKTAETSANSEKPNG). Low complexity predominate over residues 103–115 (SPASSSAPVDPAP). The span at 117–132 (ETKTAETSANSEKPNG) shows a compositional bias: polar residues.

It belongs to the TatB family. In terms of assembly, the Tat system comprises two distinct complexes: a TatABC complex, containing multiple copies of TatA, TatB and TatC subunits, and a separate TatA complex, containing only TatA subunits. Substrates initially bind to the TatABC complex, which probably triggers association of the separate TatA complex to form the active translocon.

It is found in the cell inner membrane. Functionally, part of the twin-arginine translocation (Tat) system that transports large folded proteins containing a characteristic twin-arginine motif in their signal peptide across membranes. Together with TatC, TatB is part of a receptor directly interacting with Tat signal peptides. TatB may form an oligomeric binding site that transiently accommodates folded Tat precursor proteins before their translocation. The sequence is that of Sec-independent protein translocase protein TatB from Shewanella sediminis (strain HAW-EB3).